The following is a 120-amino-acid chain: MFSLTQKIGFNAEKTACRYLQKQGLSFITKNFRYKQGEIDLIMSDQSMLVFIEVRYRRFSDFIHPVATVTPLKQRRLIKTALHYLQKHRPLDKISCRFDIVGITADRQITWIKNAIEVEY.

This sequence belongs to the UPF0102 family.

In Coxiella burnetii (strain RSA 493 / Nine Mile phase I), this protein is UPF0102 protein CBU_1742.